A 276-amino-acid chain; its full sequence is Large ribosomal subunit protein uL2 (276 aa).

Residues 218-276 (PYVRGSAMNPVDHPHGGGEGRAPIGRPAPSTPWGKPALGLKTRKKNKKSNKYIVRRRKK) form a disordered region. Residues 258–276 (KTRKKNKKSNKYIVRRRKK) show a composition bias toward basic residues.

This sequence belongs to the universal ribosomal protein uL2 family. As to quaternary structure, part of the 50S ribosomal subunit. Forms a bridge to the 30S subunit in the 70S ribosome.

Functionally, one of the primary rRNA binding proteins. Required for association of the 30S and 50S subunits to form the 70S ribosome, for tRNA binding and peptide bond formation. It has been suggested to have peptidyltransferase activity; this is somewhat controversial. Makes several contacts with the 16S rRNA in the 70S ribosome. This chain is Large ribosomal subunit protein uL2, found in Finegoldia magna (strain ATCC 29328 / DSM 20472 / WAL 2508) (Peptostreptococcus magnus).